We begin with the raw amino-acid sequence, 713 residues long: Probable arginine--tRNA ligase, cytoplasmic (713 aa).

Residues 74–113 form a disordered region; it reads KNKKNGVKATSTSSPSSSTSAPAEKKAKKDGKTGGAPPKQ. Residues 81–95 show a composition bias toward low complexity; it reads KATSTSSPSSSTSAP. The span at 96-105 shows a compositional bias: basic and acidic residues; it reads AEKKAKKDGK. Residues 252–254, H263, Y438, D442, and Q466 each bind L-arginine; that span reads SPN. A 'HIGH' region motif is present at residues 252–263; that stretch reads SPNIAKEMHVGH. The segment at 583-597 is interaction with tRNA; that stretch reads NTAVYLLYAYTRIQS.

This sequence belongs to the class-I aminoacyl-tRNA synthetase family.

Its subcellular location is the cytoplasm. It localises to the cytosol. The enzyme catalyses tRNA(Arg) + L-arginine + ATP = L-arginyl-tRNA(Arg) + AMP + diphosphate. Forms part of a macromolecular complex that catalyzes the attachment of specific amino acids to cognate tRNAs during protein synthesis. This Caenorhabditis elegans protein is Probable arginine--tRNA ligase, cytoplasmic.